A 607-amino-acid polypeptide reads, in one-letter code: Elongation factor 4 (607 aa).

A tr-type G domain is found at 11–193; it reads SKIRNFSIIA…QIVEKVPAPT (183 aa). GTP is bound by residues 23–28 and 140–143; these read DHGKST and NKID.

It belongs to the TRAFAC class translation factor GTPase superfamily. Classic translation factor GTPase family. LepA subfamily.

Its subcellular location is the cell membrane. It carries out the reaction GTP + H2O = GDP + phosphate + H(+). Functionally, required for accurate and efficient protein synthesis under certain stress conditions. May act as a fidelity factor of the translation reaction, by catalyzing a one-codon backward translocation of tRNAs on improperly translocated ribosomes. Back-translocation proceeds from a post-translocation (POST) complex to a pre-translocation (PRE) complex, thus giving elongation factor G a second chance to translocate the tRNAs correctly. Binds to ribosomes in a GTP-dependent manner. This chain is Elongation factor 4, found in Bacillus cereus (strain AH820).